A 499-amino-acid chain; its full sequence is MEFMKQLEVWFLVGSQHLYSATTLKQVADHAHTMTSQLNEGAGLPIKIVLKPTGTTLDEISSVARDANHSEQCVGLMVWMHTFSPAKMWIPALSQLQKPLLQFHTQFNRDLPWSEIDMDFMNLNQTAHGGREFGFMGARLRLPRTVVVGHWQDEEAWSKIGNWMRIAAAIHDSRHLKIARFGDNMRNVAVTEGDKIEAQIQFGYQVNYHPVGDLVKIIDAVPAADIEALLAEYEQSYTLTEAVQAGGPLRASLYEAARQELGMKKFLTEGGFGAFTTTFEDLHGLHQLPGLACQRLMQQGFGFGAEGDWKTAALLRTIKVMGTGLAGGTSFMEDYTYHLEAGNNLVLGSHMLEVCPSIAADKPVLDAQHLGIGKKADPARLLFAAPAGKAVNASLIDMGNRFRLVVNQLEVVDLPEAMPKLPVASALWKPLPSLQTSAEAWILAGAAHHSVFTQSVDIEQLRTFADIMGIEFVVIDEHTRIPALKETLRWNEVYYKICH.

E306, E333, H350, and H449 together coordinate Mn(2+).

The protein belongs to the arabinose isomerase family. Mn(2+) is required as a cofactor.

It catalyses the reaction beta-L-arabinopyranose = L-ribulose. The protein operates within carbohydrate degradation; L-arabinose degradation via L-ribulose; D-xylulose 5-phosphate from L-arabinose (bacterial route): step 1/3. In terms of biological role, catalyzes the conversion of L-arabinose to L-ribulose. This Aeromonas salmonicida (strain A449) protein is L-arabinose isomerase.